Here is a 467-residue protein sequence, read N- to C-terminus: ATP synthase subunit beta (467 aa).

Position 156-163 (156-163) interacts with ATP; that stretch reads GGAGVGKT.

Belongs to the ATPase alpha/beta chains family. F-type ATPases have 2 components, CF(1) - the catalytic core - and CF(0) - the membrane proton channel. CF(1) has five subunits: alpha(3), beta(3), gamma(1), delta(1), epsilon(1). CF(0) has three main subunits: a(1), b(2) and c(9-12). The alpha and beta chains form an alternating ring which encloses part of the gamma chain. CF(1) is attached to CF(0) by a central stalk formed by the gamma and epsilon chains, while a peripheral stalk is formed by the delta and b chains.

The protein localises to the cell inner membrane. The catalysed reaction is ATP + H2O + 4 H(+)(in) = ADP + phosphate + 5 H(+)(out). In terms of biological role, produces ATP from ADP in the presence of a proton gradient across the membrane. The catalytic sites are hosted primarily by the beta subunits. In Cupriavidus taiwanensis (strain DSM 17343 / BCRC 17206 / CCUG 44338 / CIP 107171 / LMG 19424 / R1) (Ralstonia taiwanensis (strain LMG 19424)), this protein is ATP synthase subunit beta.